Consider the following 103-residue polypeptide: N(4)-acetylcytidine amidohydrolase (103 aa).

The ASCH domain occupies 6-100 (ITFFQRFQND…NQMQFYVIDF (95 aa)). The Proton acceptor role is filled by Lys-21. Catalysis depends on Thr-24, which acts as the Nucleophile. Glu-74 functions as the Proton donor in the catalytic mechanism.

This sequence belongs to the N(4)-acetylcytidine amidohydrolase family.

The catalysed reaction is N(4)-acetylcytidine + H2O = cytidine + acetate + H(+). It catalyses the reaction N(4)-acetyl-2'-deoxycytidine + H2O = 2'-deoxycytidine + acetate + H(+). The enzyme catalyses N(4)-acetylcytosine + H2O = cytosine + acetate + H(+). Catalyzes the hydrolysis of N(4)-acetylcytidine (ac4C). In Salmonella arizonae (strain ATCC BAA-731 / CDC346-86 / RSK2980), this protein is N(4)-acetylcytidine amidohydrolase (yqfB).